We begin with the raw amino-acid sequence, 222 residues long: Putative germin-like protein 3-2 (222 aa).

The signal sequence occupies residues 1–22; that stretch reads MAKLILATFAVVFLALAATSLA. A disulfide bridge links Cys32 with Cys50. N-linked (GlcNAc...) asparagine glycosylation is found at Asn55 and Asn71. The Cupin type-1 domain occupies 64–212; sequence DGLTNAGNTT…AFQVDGGMVE (149 aa). Mn(2+) is bound by residues His112, His114, Glu119, and His158. The N-linked (GlcNAc...) asparagine glycan is linked to Asn165.

The protein belongs to the germin family. In terms of assembly, oligomer (believed to be a pentamer but probably hexamer).

Its subcellular location is the secreted. The protein localises to the extracellular space. It is found in the apoplast. Functionally, may play a role in plant defense. Probably has no oxalate oxidase activity even if the active site is conserved. The protein is Putative germin-like protein 3-2 of Oryza sativa subsp. japonica (Rice).